The sequence spans 276 residues: Ribonuclease 3 (276 aa).

Residues 1–29 (MRGTVSVPKKAEDAKADPPAKKKADTQAS) are disordered. The span at 9 to 25 (KKAEDAKADPPAKKKAD) shows a compositional bias: basic and acidic residues. The RNase III domain maps to 31–157 (HTLLEGRLGY…VIGAVYLDQG (127 aa)). E70 contacts Mg(2+). Residue D74 is part of the active site. 2 residues coordinate Mg(2+): D143 and E146. E146 is an active-site residue. The 69-residue stretch at 184–252 (DWKTSLQELT…AESAWRSIRA (69 aa)) folds into the DRBM domain. A disordered region spans residues 227–276 (YGTGTGRSKKEAEQQAAESAWRSIRAAADERAKATADAVDADPDEASASA). A compositionally biased stretch (acidic residues) spans 265–276 (VDADPDEASASA).

This sequence belongs to the ribonuclease III family. Homodimer. Mg(2+) is required as a cofactor.

It localises to the cytoplasm. The catalysed reaction is Endonucleolytic cleavage to 5'-phosphomonoester.. Functionally, digests double-stranded RNA. Involved in the processing of primary rRNA transcript to yield the immediate precursors to the large and small rRNAs (23S and 16S). Also processes some mRNAs, and tRNAs when they are encoded in the rRNA operon. May modulate key aspects of gene expression as its absence has extensive effects on the abundance of about 200 different transcripts. Probably processes pre-crRNA and tracrRNA of type II CRISPR loci if present in the organism. In Streptomyces coelicolor (strain ATCC BAA-471 / A3(2) / M145), this protein is Ribonuclease 3 (rnc).